Reading from the N-terminus, the 399-residue chain is Na(+)/H(+) antiporter NhaA (399 aa).

11 helical membrane-spanning segments follow: residues 12 to 32 (LDIA…IAAN), 60 to 80 (LLLW…GLEI), 94 to 114 (LAAL…LIYA), 126 to 146 (GWAI…TLLG), 155 to 175 (IFLT…IAFF), 178 to 198 (ASLS…LIGL), 206 to 226 (LWPY…SGVH), 263 to 283 (PWVT…VSLA), 284 to 304 (GLPP…GLFL), 336 to 356 (GVAL…TLAF), and 372 to 392 (LGVL…LRLS).

This sequence belongs to the NhaA Na(+)/H(+) (TC 2.A.33) antiporter family.

Its subcellular location is the cell inner membrane. The enzyme catalyses Na(+)(in) + 2 H(+)(out) = Na(+)(out) + 2 H(+)(in). Functionally, na(+)/H(+) antiporter that extrudes sodium in exchange for external protons. This is Na(+)/H(+) antiporter NhaA from Rhodospirillum rubrum (strain ATCC 11170 / ATH 1.1.1 / DSM 467 / LMG 4362 / NCIMB 8255 / S1).